The chain runs to 70 residues: Conotoxin AbVIB (70 aa).

A signal peptide spans 1–17 (VIIIAVLFLTACQLTTA). Residues 18 to 41 (ETSSRGKQKHRALRSTDKNSKLTR) constitute a propeptide that is removed on maturation. The interval 20 to 41 (SSRGKQKHRALRSTDKNSKLTR) is disordered. Cystine bridges form between Cys43-Cys57, Cys50-Cys61, and Cys56-Cys68.

Belongs to the conotoxin O1 superfamily. In terms of tissue distribution, expressed by the venom duct.

Its subcellular location is the secreted. In Conus abbreviatus (Abbreviated cone), this protein is Conotoxin AbVIB.